A 99-amino-acid polypeptide reads, in one-letter code: MRKITIRALLLCSLLLVFHTSAAAELQAQEGHLMIPGDTDTALETVDDERFFECTFECDIKKEGKPCKPKGCKCDDKDNKDHKKCSGGWRCKLKLCLKF.

An N-terminal signal peptide occupies residues 1–23 (MRKITIRALLLCSLLLVFHTSAA). Residues 24–50 (AELQAQEGHLMIPGDTDTALETVDDER) constitute a propeptide that is removed on maturation. Disulfide bonds link Cys-54–Cys-67, Cys-58–Cys-91, Cys-72–Cys-74, and Cys-85–Cys-96.

It belongs to the neurotoxin 12 (Hwtx-2) family. 04 (lasiotoxin) subfamily. Expressed by the venom gland.

Its subcellular location is the secreted. In terms of biological role, toxin that causes irreversible contractile paralysis into adult Aedes aegypti resulting in 100% mortality after 24 hours. The protein is U1-theraphotoxin-Lsp1c of Lasiodora sp. (strain IBSP 8539) (Brazilian salmon pink birdeater).